The chain runs to 121 residues: MSSPHVLVVDDTLVDRHVVSMALMRHNVRVTAVESVMQALMFLDSEHDVNMIVSDYCMPDMTGYDLLMEVKKSPKLAHLPVVIASSDNIPERIRKCLDGGAKDYILKPVKIVDLPRILNYI.

Residues 5-121 enclose the Response regulatory domain; that stretch reads HVLVVDDTLV…VDLPRILNYI (117 aa). 4-aspartylphosphate is present on Asp55.

Belongs to the ARR family. Type-A subfamily. Post-translationally, two-component system major event consists of a His-to-Asp phosphorelay between a sensor histidine kinase (HK) and a response regulator (RR). In plants, the His-to-Asp phosphorelay involves an additional intermediate named Histidine-containing phosphotransfer protein (HPt). This multistep phosphorelay consists of a His-Asp-His-Asp sequential transfer of a phosphate group between first a His and an Asp of the HK protein, followed by the transfer to a conserved His of the HPt protein and finally the transfer to an Asp in the receiver domain of the RR protein. As to expression, expressed in flowers and panicles.

In terms of biological role, functions as a response regulator involved in His-to-Asp phosphorelay signal transduction system. Phosphorylation of the Asp residue in the receiver domain activates the ability of the protein to promote the transcription of target genes. Type-A response regulators seem to act as negative regulators of the cytokinin signaling. The protein is Two-component response regulator ORR12 of Oryza sativa subsp. japonica (Rice).